The following is a 238-amino-acid chain: ATP-dependent Clp protease proteolytic subunit 4 (238 aa).

The active-site Nucleophile is the serine 113. Histidine 138 is an active-site residue.

Belongs to the peptidase S14 family. Fourteen ClpP subunits assemble into 2 heptameric rings which stack back to back to give a disk-like structure with a central cavity, resembling the structure of eukaryotic proteasomes.

The protein resides in the cytoplasm. It carries out the reaction Hydrolysis of proteins to small peptides in the presence of ATP and magnesium. alpha-casein is the usual test substrate. In the absence of ATP, only oligopeptides shorter than five residues are hydrolyzed (such as succinyl-Leu-Tyr-|-NHMec, and Leu-Tyr-Leu-|-Tyr-Trp, in which cleavage of the -Tyr-|-Leu- and -Tyr-|-Trp bonds also occurs).. Functionally, cleaves peptides in various proteins in a process that requires ATP hydrolysis. Has a chymotrypsin-like activity. Plays a major role in the degradation of misfolded proteins. The chain is ATP-dependent Clp protease proteolytic subunit 4 from Frankia casuarinae (strain DSM 45818 / CECT 9043 / HFP020203 / CcI3).